A 208-amino-acid chain; its full sequence is Protein-L-isoaspartate O-methyltransferase (208 aa).

Ser59 is a catalytic residue.

This sequence belongs to the methyltransferase superfamily. L-isoaspartyl/D-aspartyl protein methyltransferase family.

The protein resides in the cytoplasm. It catalyses the reaction [protein]-L-isoaspartate + S-adenosyl-L-methionine = [protein]-L-isoaspartate alpha-methyl ester + S-adenosyl-L-homocysteine. Its function is as follows. Catalyzes the methyl esterification of L-isoaspartyl residues in peptides and proteins that result from spontaneous decomposition of normal L-aspartyl and L-asparaginyl residues. It plays a role in the repair and/or degradation of damaged proteins. In Cronobacter sakazakii (strain ATCC BAA-894) (Enterobacter sakazakii), this protein is Protein-L-isoaspartate O-methyltransferase.